The following is a 1092-amino-acid chain: Probable cellulose synthase A catalytic subunit 5 [UDP-forming] (1092 aa).

Topologically, residues 1–279 (MEASAGLVAG…SSSLVNPYRM (279 aa)) are cytoplasmic. Cys-39, Cys-42, Cys-58, Cys-61, Cys-66, Cys-69, Cys-81, and Cys-84 together coordinate Zn(2+). The RING-type; degenerate zinc-finger motif lies at 39–85 (CQICGDDVGLTPDGEPFVACNECAFPVCRDCYEYERREGTQNCPQCK). Residues 280 to 300 (IIIIRLVVLGFFFHYRVMHPV) form a helical membrane-spanning segment. Residues 301-302 (PD) are Extracellular-facing. The chain crosses the membrane as a helical span at residues 303-323 (AFALWLISVICEIWFAMSWIL). Residues 324–868 (DQFPKWFPIE…CLERFSYINS (545 aa)) are Cytoplasmic-facing. Ser-362, Lys-368, Glu-369, and Asp-398 together coordinate UDP-alpha-D-glucose. Asp-398 is an active-site residue. Positions 450 to 479 (NFVRERRAMKREYEEFKVRINALVAKAQKV) form a coiled coil. Lys-539 is a UDP-alpha-D-glucose binding site. Mn(2+) is bound by residues Lys-540 and Asp-564. Residue Asp-792 is part of the active site. The chain crosses the membrane as a helical span at residues 869 to 889 (IVYPWTSIPLLAYCTLPAICL). Over 890-901 (LTGKFITPELTN) the chain is Extracellular. The chain crosses the membrane as a helical span at residues 902-922 (IASLWFMSLFICIFATGILEM). Topologically, residues 923-938 (RWSGVGIDDWWRNEQF) are cytoplasmic. A helical membrane pass occupies residues 939–959 (WVIGGVSSHLFAVFQGLLKVI). Residues 960–987 (AGIDTSFTVTSKGGDDEEFSELYTFKWT) are Extracellular-facing. The helical transmembrane segment at 988 to 1008 (TLLIPPTTLLLLNFIGVVAGV) threads the bilayer. The Cytoplasmic segment spans residues 1009–1019 (SNAINNGYESW). The chain crosses the membrane as a helical span at residues 1020 to 1040 (GPLFGKLFFAFWVIVHLYPFL). The Extracellular segment spans residues 1041–1049 (KGLVGRQNR). Residues 1050 to 1070 (TPTIVIVWSILLASIFSLLWV) traverse the membrane as a helical segment. Residues 1071–1092 (RIDPFLAKNDGPLLEECGLDCN) lie on the Cytoplasmic side of the membrane.

The protein belongs to the glycosyltransferase 2 family. Plant cellulose synthase subfamily. Requires Mn(2+) as cofactor. It depends on Zn(2+) as a cofactor.

It is found in the cell membrane. The catalysed reaction is [(1-&gt;4)-beta-D-glucosyl](n) + UDP-alpha-D-glucose = [(1-&gt;4)-beta-D-glucosyl](n+1) + UDP + H(+). It participates in glycan metabolism; plant cellulose biosynthesis. Probable catalytic subunit of cellulose synthase terminal complexes ('rosettes'), required for beta-1,4-glucan microfibril crystallization, a major mechanism of the cell wall formation. The chain is Probable cellulose synthase A catalytic subunit 5 [UDP-forming] (CESA5) from Oryza sativa subsp. indica (Rice).